Consider the following 462-residue polypeptide: Cathepsin F (462 aa).

The signal sequence occupies residues 1–19; the sequence is MAPLLQLLWLLTLLSTVAL. The propeptide at 20-248 is activation peptide; that stretch reads SPVPAKPWAD…MSPAKSINDL (229 aa). Asparagine 35, asparagine 138, and asparagine 173 each carry an N-linked (GlcNAc...) asparagine glycan. 2 disulfides stabilise this stretch: cysteine 270-cysteine 311 and cysteine 304-cysteine 344. Cysteine 273 is an active-site residue. Residues asparagine 345 and asparagine 356 are each glycosylated (N-linked (GlcNAc...) asparagine). Cysteine 402 and cysteine 450 are disulfide-bonded. Residue histidine 409 is part of the active site. Asparagine 418 carries an N-linked (GlcNAc...) asparagine glycan. Asparagine 429 is an active-site residue.

It belongs to the peptidase C1 family.

The protein localises to the lysosome. The enzyme catalyses The recombinant enzyme cleaves synthetic substrates with Phe and Leu (better than Val) in P2, with high specificity constant (kcat/Km) comparable to that of cathepsin L.. Functionally, thiol protease which is believed to participate in intracellular degradation and turnover of proteins. Has also been implicated in tumor invasion and metastasis. The sequence is that of Cathepsin F (Ctsf) from Mus musculus (Mouse).